Here is a 500-residue protein sequence, read N- to C-terminus: Cytochrome P450 2C11 (500 aa).

Residue Cys-435 coordinates heme.

The protein belongs to the cytochrome P450 family. Heme is required as a cofactor. Liver and kidney; male-specific.

It localises to the endoplasmic reticulum membrane. The protein resides in the microsome membrane. The catalysed reaction is an organic molecule + reduced [NADPH--hemoprotein reductase] + O2 = an alcohol + oxidized [NADPH--hemoprotein reductase] + H2O + H(+). It catalyses the reaction testosterone + reduced [NADPH--hemoprotein reductase] + O2 = 2alpha,17beta-dihydroxyandrost-4-en-3-one + oxidized [NADPH--hemoprotein reductase] + H2O + H(+). It carries out the reaction testosterone + reduced [NADPH--hemoprotein reductase] + O2 = 16alpha,17beta-dihydroxyandrost-4-en-3-one + oxidized [NADPH--hemoprotein reductase] + H2O + H(+). The enzyme catalyses (5Z,8Z,11Z,14Z)-eicosatetraenoate + reduced [NADPH--hemoprotein reductase] + O2 = (8R,9S)-epoxy-(5Z,11Z,14Z)-eicosatrienoate + oxidized [NADPH--hemoprotein reductase] + H2O + H(+). The catalysed reaction is (5Z,8Z,11Z,14Z)-eicosatetraenoate + reduced [NADPH--hemoprotein reductase] + O2 = (8S,9R)-epoxy-(5Z,11Z,14Z)-eicosatrienoate + oxidized [NADPH--hemoprotein reductase] + H2O + H(+). It catalyses the reaction (5Z,8Z,11Z,14Z)-eicosatetraenoate + reduced [NADPH--hemoprotein reductase] + O2 = (11R,12S)-epoxy-(5Z,8Z,14Z)-eicosatrienoate + oxidized [NADPH--hemoprotein reductase] + H2O + H(+). It carries out the reaction (5Z,8Z,11Z,14Z)-eicosatetraenoate + reduced [NADPH--hemoprotein reductase] + O2 = (11S,12R)-epoxy-(5Z,8Z,14Z)-eicosatrienoate + oxidized [NADPH--hemoprotein reductase] + H2O + H(+). The enzyme catalyses (5Z,8Z,11Z,14Z)-eicosatetraenoate + reduced [NADPH--hemoprotein reductase] + O2 = (14R,15S)-epoxy-(5Z,8Z,11Z)-eicosatrienoate + oxidized [NADPH--hemoprotein reductase] + H2O + H(+). The catalysed reaction is (5Z,8Z,11Z,14Z)-eicosatetraenoate + reduced [NADPH--hemoprotein reductase] + O2 = (14S,15R)-epoxy-(5Z,8Z,11Z)-eicosatrienoate + oxidized [NADPH--hemoprotein reductase] + H2O + H(+). It catalyses the reaction (5Z,8Z,11Z,14Z,17Z)-eicosapentaenoate + reduced [NADPH--hemoprotein reductase] + O2 = 8,9-epoxy-(5Z,11Z,14Z,17Z)-eicosatetraenoate + oxidized [NADPH--hemoprotein reductase] + H2O + H(+). It carries out the reaction (5Z,8Z,11Z,14Z,17Z)-eicosapentaenoate + reduced [NADPH--hemoprotein reductase] + O2 = 11,12-epoxy-(5Z,8Z,14Z,17Z)-eicosatetraenoate + oxidized [NADPH--hemoprotein reductase] + H2O + H(+). The enzyme catalyses (5Z,8Z,11Z,14Z,17Z)-eicosapentaenoate + reduced [NADPH--hemoprotein reductase] + O2 = 14,15-epoxy-(5Z,8Z,11Z,17Z)-eicosatetraenoate + oxidized [NADPH--hemoprotein reductase] + H2O + H(+). The catalysed reaction is (5Z,8Z,11Z,14Z,17Z)-eicosapentaenoate + reduced [NADPH--hemoprotein reductase] + O2 = (17S,18R)-epoxy-(5Z,8Z,11Z,14Z)-eicosatetraenoate + oxidized [NADPH--hemoprotein reductase] + H2O + H(+). It catalyses the reaction (5Z,8Z,11Z,14Z,17Z)-eicosapentaenoate + reduced [NADPH--hemoprotein reductase] + O2 = (17R,18S)-epoxy-(5Z,8Z,11Z,14Z)-eicosatetraenoate + oxidized [NADPH--hemoprotein reductase] + H2O + H(+). Its pathway is lipid metabolism; arachidonate metabolism. It participates in steroid metabolism. Functionally, a cytochrome P450 monooxygenase involved in the metabolism of steroid hormones and fatty acids. Catalyzes the hydroxylation of carbon-hydrogen bonds. Metabolizes testosterone to 2alpha- and 16alpha-hydroxytestosterone. Catalyzes the epoxidation of double bonds of polyunsaturated fatty acids (PUFAs). Converts arachidonic acid (ARA, C20:4(n-6)) primarily to epoxyeicosatrienoic acid (EET) regioisomers, 8,9-, 11,12-, and 14,15-EET, with both R,S and S,R stereochemistry. Preferentially produces 11R,12S-EET enantiomer. To a lesser extent, catalyzes the hydroxylation of arachidonic acid producing hydroxyeicosatetraenoates (HETEs). Metabolizes eicosapentaenoic acid (EPA, C20:5(n-3)) to epoxyeicosatetraenoic acid (EETeTr) regioisomers, 8,9-, 11,12-, 14,15-, and 17,18-EETeTr, preferentially producing 17R,18S-EETeTr enantiomer. Mechanistically, uses molecular oxygen inserting one oxygen atom into a substrate, and reducing the second into a water molecule, with two electrons provided by NADPH via cytochrome P450 reductase (NADPH--hemoprotein reductase). The protein is Cytochrome P450 2C11 (Cyp2c11) of Rattus norvegicus (Rat).